The primary structure comprises 179 residues: Auxin-responsive protein IAA15 (179 aa).

Positions Leu21–Leu25 match the EAR-like (transcriptional repression) motif. The PB1 domain occupies Arg86–Thr173.

This sequence belongs to the Aux/IAA family. Homodimers and heterodimers.

The protein resides in the nucleus. Aux/IAA proteins are short-lived transcriptional factors that function as repressors of early auxin response genes at low auxin concentrations. Repression is thought to result from the interaction with auxin response factors (ARFs), proteins that bind to the auxin-responsive promoter element (AuxRE). Formation of heterodimers with ARF proteins may alter their ability to modulate early auxin response genes expression. The protein is Auxin-responsive protein IAA15 (IAA15) of Arabidopsis thaliana (Mouse-ear cress).